The following is a 476-amino-acid chain: UDP-N-acetylmuramate--L-alanine ligase (476 aa).

121–127 contacts ATP; that stretch reads GAHGKTT.

Belongs to the MurCDEF family.

The protein resides in the cytoplasm. The enzyme catalyses UDP-N-acetyl-alpha-D-muramate + L-alanine + ATP = UDP-N-acetyl-alpha-D-muramoyl-L-alanine + ADP + phosphate + H(+). The protein operates within cell wall biogenesis; peptidoglycan biosynthesis. In terms of biological role, cell wall formation. This is UDP-N-acetylmuramate--L-alanine ligase from Clavibacter sepedonicus (Clavibacter michiganensis subsp. sepedonicus).